The following is a 93-amino-acid chain: MSRSIKKGPFADASLLKKVDAQADADKKQVIKTWSRRSTIFPSFVGLTIAVYDGRKHVPVYITEDMVGHKLGEFVPTRTFHGHKSTEDKTTAK.

The protein belongs to the universal ribosomal protein uS19 family.

Its function is as follows. Protein S19 forms a complex with S13 that binds strongly to the 16S ribosomal RNA. The chain is Small ribosomal subunit protein uS19 from Lactobacillus helveticus (strain DPC 4571).